Reading from the N-terminus, the 492-residue chain is Probable glycine dehydrogenase (decarboxylating) subunit 2 (492 aa).

N6-(pyridoxal phosphate)lysine is present on lysine 274.

Belongs to the GcvP family. C-terminal subunit subfamily. In terms of assembly, the glycine cleavage system is composed of four proteins: P, T, L and H. In this organism, the P 'protein' is a heterodimer of two subunits. Requires pyridoxal 5'-phosphate as cofactor.

It carries out the reaction N(6)-[(R)-lipoyl]-L-lysyl-[glycine-cleavage complex H protein] + glycine + H(+) = N(6)-[(R)-S(8)-aminomethyldihydrolipoyl]-L-lysyl-[glycine-cleavage complex H protein] + CO2. The glycine cleavage system catalyzes the degradation of glycine. The P protein binds the alpha-amino group of glycine through its pyridoxal phosphate cofactor; CO(2) is released and the remaining methylamine moiety is then transferred to the lipoamide cofactor of the H protein. The sequence is that of Probable glycine dehydrogenase (decarboxylating) subunit 2 from Exiguobacterium sibiricum (strain DSM 17290 / CCUG 55495 / CIP 109462 / JCM 13490 / 255-15).